We begin with the raw amino-acid sequence, 218 residues long: Protein GrpE (218 aa).

2 stretches are compositionally biased toward basic and acidic residues: residues 1–13 (MSKN…HQNN) and 20–32 (VDKK…NKQE). A disordered region spans residues 1–32 (MSKNNENIKHQNNDKVNNQVDKKETKNHNKQE).

It belongs to the GrpE family. In terms of assembly, homodimer.

The protein localises to the cytoplasm. Functionally, participates actively in the response to hyperosmotic and heat shock by preventing the aggregation of stress-denatured proteins, in association with DnaK and GrpE. It is the nucleotide exchange factor for DnaK and may function as a thermosensor. Unfolded proteins bind initially to DnaJ; upon interaction with the DnaJ-bound protein, DnaK hydrolyzes its bound ATP, resulting in the formation of a stable complex. GrpE releases ADP from DnaK; ATP binding to DnaK triggers the release of the substrate protein, thus completing the reaction cycle. Several rounds of ATP-dependent interactions between DnaJ, DnaK and GrpE are required for fully efficient folding. This Ureaplasma parvum serovar 3 (strain ATCC 27815 / 27 / NCTC 11736) protein is Protein GrpE.